The primary structure comprises 457 residues: MNLTFDTIAAQATPNGRGGIGIVRVSGTLTTRVAKELLGKVPIQRKAEYLTFYHQNGNIIDKGIALFFPGPNSFTGEDILELHGHGGPVVLDLLLQRIITLPGVRIARPGEFSERAFLNEKIDLAQAEAIADLIDANSAQAARAAISSLQGVFSTTINDLVEKLTSLRVDIEAKINFPEENETNVSIDKKIIANLDQAILSINKIRTAAYQGCILREGIKIVITGKPNVGKSSIINALAGHEVAIVTNIAGTTRDILREYIYLDGIPVSIIDTAGLCNVSHNEVEKIGIQRAWNEIKQADHILLVVDSSTTKLSEQDKLCNTLIANFPYKTPVTIIRNKADITGEKIGETLNNNYSVITISALSSLGIEILLKYLTKIISLPSSTEGVFLARRRHLEALEITANYLLQCKEKISFPTMLELIAEDLQLAHNALSQITGKFSSHELLKKIFSRFCLGK.

(6S)-5-formyl-5,6,7,8-tetrahydrofolate is bound by residues R24, E81, and K121. The region spanning 218 to 380 (GIKIVITGKP…LLKYLTKIIS (163 aa)) is the TrmE-type G domain. N228 provides a ligand contact to K(+). GTP is bound by residues 228 to 233 (NVGKSS), 247 to 253 (TNIAGTT), 272 to 275 (DTAG), and 338 to 341 (NKAD). S232 contacts Mg(2+). Residues T247, I249, and T252 each contribute to the K(+) site. A Mg(2+)-binding site is contributed by T253. (6S)-5-formyl-5,6,7,8-tetrahydrofolate is bound at residue K457.

Belongs to the TRAFAC class TrmE-Era-EngA-EngB-Septin-like GTPase superfamily. TrmE GTPase family. Homodimer. Heterotetramer of two MnmE and two MnmG subunits. K(+) serves as cofactor.

The protein localises to the cytoplasm. In terms of biological role, exhibits a very high intrinsic GTPase hydrolysis rate. Involved in the addition of a carboxymethylaminomethyl (cmnm) group at the wobble position (U34) of certain tRNAs, forming tRNA-cmnm(5)s(2)U34. The protein is tRNA modification GTPase MnmE of Baumannia cicadellinicola subsp. Homalodisca coagulata.